The sequence spans 469 residues: Dynein axonemal assembly factor 11 (469 aa).

LRR repeat units lie at residues 20–43 (IFSLEEISLHQQDLERIEHIDKWC), 44–65 (RELKILYLQNNLIGKIENVSKL), 66–89 (KKLEYLNLALNNIEKIENLEGCES), and 90–110 (LQKLDLTVNFVGELSSINSLQ). An LRRCT domain is found at 114–135 (HLRELYLVGNPCAEYEGYRQYV). Basic and acidic residues-rich tracts occupy residues 179–213 (KRAAEREEARSKLQGKQKESRKTQEKKPGFDRRWY) and 261–286 (SRLETHRYLEEKRKSKESSSEGELKK). Disordered regions lie at residues 179-290 (KRAA…KPPR) and 436-469 (KTQAQGPLQFHKNKVKDTEDSEDFIDNTDVPPLM).

The protein belongs to the tilB family.

The protein localises to the cytoplasm. It is found in the cell projection. Its subcellular location is the cilium. The protein resides in the dynein axonemal particle. It localises to the flagellum. Functionally, involved in dynein arm assembly, is important for expression and transporting outer dynein arm (ODA) proteins from the cytoplasm to the cilia. This chain is Dynein axonemal assembly factor 11 (dnaaf11), found in Xenopus laevis (African clawed frog).